Here is a 94-residue protein sequence, read N- to C-terminus: Large ribosomal subunit protein bL27 (94 aa).

A propeptide spanning residues 1-9 (MTLNNLQLF) is cleaved from the precursor. Residues 9-33 (FAHKKGGGSTSNGRDSQAKRLGAKA) are disordered.

Belongs to the bacterial ribosomal protein bL27 family. The N-terminus is cleaved by ribosomal processing cysteine protease Prp.

This Streptococcus pneumoniae serotype 4 (strain ATCC BAA-334 / TIGR4) protein is Large ribosomal subunit protein bL27.